We begin with the raw amino-acid sequence, 131 residues long: Small ribosomal subunit protein uS11 (131 aa).

This sequence belongs to the universal ribosomal protein uS11 family. Part of the 30S ribosomal subunit. Interacts with proteins S7 and S18. Binds to IF-3.

In terms of biological role, located on the platform of the 30S subunit, it bridges several disparate RNA helices of the 16S rRNA. Forms part of the Shine-Dalgarno cleft in the 70S ribosome. This is Small ribosomal subunit protein uS11 from Helicobacter acinonychis (strain Sheeba).